The primary structure comprises 338 residues: Mugineic-acid 3-dioxygenase (338 aa).

The Fe2OG dioxygenase domain maps to 180-283 (DISGGRVVVD…RLSVASFIVP (104 aa)). Residues H208, D210, and H264 each contribute to the Fe cation site. R274 is a binding site for 2-oxoglutarate.

The protein belongs to the iron/ascorbate-dependent oxidoreductase family. The cofactor is Fe(2+). L-ascorbate serves as cofactor. In terms of tissue distribution, expressed in roots, but not in leaves.

It catalyses the reaction mugineate + 2-oxoglutarate + O2 = 3-epihydroxymugineate + succinate + CO2 + H(+). The catalysed reaction is 2'-deoxymugineate + 2-oxoglutarate + O2 = 3-epihydroxy-2'-deoxymugineate + succinate + CO2 + H(+). Involved in the biosynthesis of mugineic acid family of phytosiderophores. Hydroxylates the C-3 positions of mugineic acid (MA) and 2'-deoxymugineic acid (DMA). May be involved in boron tolerance. This is Mugineic-acid 3-dioxygenase (IDS2) from Hordeum vulgare (Barley).